The chain runs to 189 residues: GTP cyclohydrolase 1 (189 aa).

Cysteine 79, histidine 82, and cysteine 151 together coordinate Zn(2+).

It belongs to the GTP cyclohydrolase I family. In terms of assembly, toroid-shaped homodecamer, composed of two pentamers of five dimers.

It catalyses the reaction GTP + H2O = 7,8-dihydroneopterin 3'-triphosphate + formate + H(+). The protein operates within cofactor biosynthesis; 7,8-dihydroneopterin triphosphate biosynthesis; 7,8-dihydroneopterin triphosphate from GTP: step 1/1. In Lactiplantibacillus plantarum (strain ATCC BAA-793 / NCIMB 8826 / WCFS1) (Lactobacillus plantarum), this protein is GTP cyclohydrolase 1.